A 90-amino-acid polypeptide reads, in one-letter code: UPF0213 protein lin0209 (90 aa).

The 76-residue stretch at 5 to 80 (NEHFFYVLKC…KKLSRKNKDS (76 aa)) folds into the GIY-YIG domain.

This sequence belongs to the UPF0213 family.

The chain is UPF0213 protein lin0209 from Listeria innocua serovar 6a (strain ATCC BAA-680 / CLIP 11262).